The following is a 374-amino-acid chain: Methylthioribose-1-phosphate isomerase (374 aa).

D251 serves as the catalytic Proton donor.

Belongs to the eIF-2B alpha/beta/delta subunits family. MtnA subfamily.

The protein resides in the cytoplasm. It localises to the nucleus. The enzyme catalyses 5-(methylsulfanyl)-alpha-D-ribose 1-phosphate = 5-(methylsulfanyl)-D-ribulose 1-phosphate. The protein operates within amino-acid biosynthesis; L-methionine biosynthesis via salvage pathway; L-methionine from S-methyl-5-thio-alpha-D-ribose 1-phosphate: step 1/6. Functionally, catalyzes the interconversion of methylthioribose-1-phosphate (MTR-1-P) into methylthioribulose-1-phosphate (MTRu-1-P). This chain is Methylthioribose-1-phosphate isomerase, found in Oryza sativa subsp. indica (Rice).